The chain runs to 318 residues: Olfactory receptor 56A1 (318 aa).

Over 1–32 (MIQPMASPSNSSTVPVSEFLLICFPNFQSWQH) the chain is Extracellular. An N-linked (GlcNAc...) asparagine glycan is attached at N10. A helical membrane pass occupies residues 33-53 (WLSLPLSLLFLLAMGANTTLL). Residues 54-61 (ITIQLEAS) lie on the Cytoplasmic side of the membrane. The chain crosses the membrane as a helical span at residues 62–82 (LHQPLYYLLSLLSLLDIVLCL). Over 83 to 106 (TVIPKVLAIFWYDLRSISFPACFL) the chain is Extracellular. C104 and C196 are joined by a disulfide. The chain crosses the membrane as a helical span at residues 107-127 (QMFIMNSFLPMESCTFMVMAY). The Cytoplasmic segment spans residues 128–146 (DRYVAICHPLRYPSIITNQ). The chain crosses the membrane as a helical span at residues 147-167 (FVAKASVFIVVRNALLTAPIP). The Extracellular portion of the chain corresponds to 168-203 (ILTSLLHYCGENVIENCICANLSVSRLSCDNFTLNR). N-linked (GlcNAc...) asparagine glycosylation is found at N188 and N198. The chain crosses the membrane as a helical span at residues 204 to 224 (IYQFVAGWTLLGSDLFLIFLS). The Cytoplasmic portion of the chain corresponds to 225-244 (YTFILRAVLRFKAEGAAVKA). A helical membrane pass occupies residues 245–265 (LSTCGSHFILILFFSTILLVV). Residues 266 to 280 (VLTNVARKKVPMDIL) lie on the Extracellular side of the membrane. Residues 281-301 (ILLNVLHHLIPPALNPIVYGV) traverse the membrane as a helical segment. The Cytoplasmic segment spans residues 302–318 (RTKEIKQGIQKLLQRGR).

This sequence belongs to the G-protein coupled receptor 1 family.

Its subcellular location is the cell membrane. Odorant receptor. The sequence is that of Olfactory receptor 56A1 (OR56A1) from Homo sapiens (Human).